The chain runs to 318 residues: uncharacterized protein (318 aa).

The protein belongs to the NAD(P)-dependent epimerase/dehydratase family.

This is an uncharacterized protein from Staphylococcus epidermidis (strain ATCC 12228 / FDA PCI 1200).